Here is a 529-residue protein sequence, read N- to C-terminus: Heat shock protein 60 (529 aa).

The disordered stretch occupies residues 460 to 484; it reads YQATVQHPPPQSSYEEDGRRPPTQP.

The polypeptide is Heat shock protein 60 (Giardia intestinalis (Giardia lamblia)).